The sequence spans 207 residues: Large ribosomal subunit protein uL3c (207 aa).

Residues 115-151 (IGKGFAGNQKRHNFSRGPMTHGSKNHRLPGSIGAGST) form a disordered region.

The protein belongs to the universal ribosomal protein uL3 family. Part of the 50S ribosomal subunit.

It localises to the plastid. The protein resides in the chloroplast. Functionally, one of the primary rRNA binding proteins, it binds directly near the 3'-end of the 23S rRNA, where it nucleates assembly of the 50S subunit. This Emiliania huxleyi (Coccolithophore) protein is Large ribosomal subunit protein uL3c (rpl3).